We begin with the raw amino-acid sequence, 943 residues long: Isoleucine--tRNA ligase (943 aa).

The 'HIGH' region motif lies at 58 to 68 (PYANGSIHIGH). Glutamate 567 contacts L-isoleucyl-5'-AMP. A 'KMSKS' region motif is present at residues 608–612 (KMSKS). Lysine 611 contributes to the ATP binding site. 4 residues coordinate Zn(2+): cysteine 906, cysteine 909, cysteine 926, and cysteine 929.

This sequence belongs to the class-I aminoacyl-tRNA synthetase family. IleS type 1 subfamily. In terms of assembly, monomer. Zn(2+) serves as cofactor.

Its subcellular location is the cytoplasm. It carries out the reaction tRNA(Ile) + L-isoleucine + ATP = L-isoleucyl-tRNA(Ile) + AMP + diphosphate. In terms of biological role, catalyzes the attachment of isoleucine to tRNA(Ile). As IleRS can inadvertently accommodate and process structurally similar amino acids such as valine, to avoid such errors it has two additional distinct tRNA(Ile)-dependent editing activities. One activity is designated as 'pretransfer' editing and involves the hydrolysis of activated Val-AMP. The other activity is designated 'posttransfer' editing and involves deacylation of mischarged Val-tRNA(Ile). The polypeptide is Isoleucine--tRNA ligase (Pseudomonas fluorescens (strain ATCC BAA-477 / NRRL B-23932 / Pf-5)).